The primary structure comprises 202 residues: Na(+)-translocating NADH-quinone reductase subunit E (202 aa).

A run of 6 helical transmembrane segments spans residues 11 to 31 (SVFI…FLAV), 35 to 55 (VTTA…SVPA), 79 to 99 (LSFL…QILE), 114 to 134 (GIFL…AFMV), 144 to 164 (LVFG…LAAV), and 180 to 200 (LGIT…FSGV).

This sequence belongs to the NqrDE/RnfAE family. As to quaternary structure, composed of six subunits; NqrA, NqrB, NqrC, NqrD, NqrE and NqrF.

The protein resides in the cell inner membrane. The enzyme catalyses a ubiquinone + n Na(+)(in) + NADH + H(+) = a ubiquinol + n Na(+)(out) + NAD(+). In terms of biological role, NQR complex catalyzes the reduction of ubiquinone-1 to ubiquinol by two successive reactions, coupled with the transport of Na(+) ions from the cytoplasm to the periplasm. NqrA to NqrE are probably involved in the second step, the conversion of ubisemiquinone to ubiquinol. The polypeptide is Na(+)-translocating NADH-quinone reductase subunit E (Shewanella denitrificans (strain OS217 / ATCC BAA-1090 / DSM 15013)).